The primary structure comprises 395 residues: XK-related protein 8 (395 aa).

The Cytoplasmic portion of the chain corresponds to 1-12 (MPWSSRGALLRD). A helical transmembrane segment spans residues 13-33 (LVLGVLGTAAFLLDLGTDLWA). The Extracellular portion of the chain corresponds to 34–47 (AVQYALGGRYLWAA). The chain crosses the membrane as a helical span at residues 48–68 (LVLALLGLASVALQLFSWLWL). The Cytoplasmic segment spans residues 69–158 (RADPAGLHGS…VLAIMLQSGR (90 aa)). The chain crosses the membrane as a helical span at residues 159 to 179 (AEYYQWVGICTSFLGISWALL). The Extracellular portion of the chain corresponds to 180–200 (DYHRALRTCLPSRPLLGLGSS). A helical membrane pass occupies residues 201-221 (VIYFLWNLLLLWPRVLAVALF). The Cytoplasmic segment spans residues 222 to 223 (SA). A helical membrane pass occupies residues 224–244 (LFPSYVALHFLGLWLVLLLWV). Over 245–258 (WLQGTDFMPDPSSE) the chain is Extracellular. The chain crosses the membrane as a helical span at residues 259–279 (WLYQVTVATILYFSWFNVAEG). The Cytoplasmic portion of the chain corresponds to 280 to 284 (RTRGR). A helical membrane pass occupies residues 285–305 (AIIHFAFLLSDSILLVATWVT). The Extracellular portion of the chain corresponds to 306–312 (HSSWLPS). Residues 313 to 333 (GIPLQLWLPVGCGCFFLGLAL) form a helical membrane-spanning segment. At 334–395 (RLVYYHWLHP…KDEAALPVKG (62 aa)) the chain is on the cytoplasmic side. Serine 362 is subject to Phosphoserine. Threonine 375 bears the Phosphothreonine mark.

It belongs to the XK family. In terms of assembly, interacts with BSG and NPTN; which act as chaperones to localize XKR8 at the cell membrane. As to quaternary structure, homodimer. In terms of processing, undergoes proteolytic processing by caspase-3 (CASP3), leading to its activation. Post-translationally, phosphorylation at Thr-375 activates the phospholipid scramblase activity.

It is found in the cell membrane. Its subcellular location is the cytoplasm. The protein localises to the perinuclear region. The enzyme catalyses a 1,2-diacyl-sn-glycero-3-phospho-L-serine(in) = a 1,2-diacyl-sn-glycero-3-phospho-L-serine(out). Activated upon caspase cleavage to generate the XK-related protein 8, processed form. Does not act prior the onset of apoptosis. Functionally, phospholipid scramblase that promotes phosphatidylserine exposure on apoptotic cell surface. Phosphatidylserine is a specific marker only present at the surface of apoptotic cells and acts as a specific signal for engulfment. Required for the clearance of apoptotic cells, such as engulfment of apoptotic germ cells by Sertoli cells, clearance of senescent neutrophils or regulation of bipolar cell numbers in the retina. Has no effect on calcium-induced exposure of phosphatidylserine. Promotes myoblast differentiation and survival. This chain is XK-related protein 8, found in Pan troglodytes (Chimpanzee).